The primary structure comprises 164 residues: Sec-independent protein translocase protein TatB (164 aa).

Residues 1–21 (MIDIGLSKMALIGAVALIVIG) traverse the membrane as a helical segment. The disordered stretch occupies residues 81–102 (ASEFQKDWESGTSDAAATGHDG).

This sequence belongs to the TatB family. The Tat system comprises two distinct complexes: a TatABC complex, containing multiple copies of TatA, TatB and TatC subunits, and a separate TatA complex, containing only TatA subunits. Substrates initially bind to the TatABC complex, which probably triggers association of the separate TatA complex to form the active translocon.

The protein resides in the cell inner membrane. Its function is as follows. Part of the twin-arginine translocation (Tat) system that transports large folded proteins containing a characteristic twin-arginine motif in their signal peptide across membranes. Together with TatC, TatB is part of a receptor directly interacting with Tat signal peptides. TatB may form an oligomeric binding site that transiently accommodates folded Tat precursor proteins before their translocation. This is Sec-independent protein translocase protein TatB from Paracidovorax citrulli (strain AAC00-1) (Acidovorax citrulli).